Consider the following 516-residue polypeptide: Putative F-box and FNIP repeat-containing protein L414 (516 aa).

Positions 4-49 (INDLNMDVILHLLTFLTDKNKLNFMMTCTHLYQFISCVKYNNFQLF) constitute an F-box domain. 5 FNIP repeats span residues 123 to 165 (FNHT…FGEN), 166 to 208 (FNKM…LMYS), 341 to 383 (YNPK…NFNG), 385 to 428 (YDNI…FGKL), and 429 to 470 (YNKP…FGYM).

This chain is Putative F-box and FNIP repeat-containing protein L414, found in Acanthamoeba polyphaga (Amoeba).